The primary structure comprises 345 residues: Phosphate acyltransferase (345 aa).

It belongs to the PlsX family. As to quaternary structure, homodimer. Probably interacts with PlsY.

The protein resides in the cytoplasm. It catalyses the reaction a fatty acyl-[ACP] + phosphate = an acyl phosphate + holo-[ACP]. The protein operates within lipid metabolism; phospholipid metabolism. In terms of biological role, catalyzes the reversible formation of acyl-phosphate (acyl-PO(4)) from acyl-[acyl-carrier-protein] (acyl-ACP). This enzyme utilizes acyl-ACP as fatty acyl donor, but not acyl-CoA. This chain is Phosphate acyltransferase, found in Levilactobacillus brevis (strain ATCC 367 / BCRC 12310 / CIP 105137 / JCM 1170 / LMG 11437 / NCIMB 947 / NCTC 947) (Lactobacillus brevis).